An 877-amino-acid polypeptide reads, in one-letter code: Alanine--tRNA ligase (877 aa).

Zn(2+) contacts are provided by His565, His569, Cys667, and His671.

It belongs to the class-II aminoacyl-tRNA synthetase family. Requires Zn(2+) as cofactor.

The protein localises to the cytoplasm. The enzyme catalyses tRNA(Ala) + L-alanine + ATP = L-alanyl-tRNA(Ala) + AMP + diphosphate. In terms of biological role, catalyzes the attachment of alanine to tRNA(Ala) in a two-step reaction: alanine is first activated by ATP to form Ala-AMP and then transferred to the acceptor end of tRNA(Ala). Also edits incorrectly charged Ser-tRNA(Ala) and Gly-tRNA(Ala) via its editing domain. This is Alanine--tRNA ligase from Chromobacterium violaceum (strain ATCC 12472 / DSM 30191 / JCM 1249 / CCUG 213 / NBRC 12614 / NCIMB 9131 / NCTC 9757 / MK).